The sequence spans 295 residues: HTH-type transcriptional regulator ShiR (295 aa).

Residues 1–58 (MEIRWLEGFIAVAEELHFSNAAIRLGMPQSPLSQLIRRLESELGQKLFDRSTRSVELT) enclose the HTH lysR-type domain. A DNA-binding region (H-T-H motif) is located at residues 18 to 37 (FSNAAIRLGMPQSPLSQLIR).

This sequence belongs to the LysR transcriptional regulatory family.

Functionally, activates expression of the shikimate transporter ShiA in the presence of shikimate. Binds to the shiA promoter region. This is HTH-type transcriptional regulator ShiR from Corynebacterium glutamicum (strain R).